Consider the following 270-residue polypeptide: tRNA pseudouridine synthase A (270 aa).

Catalysis depends on Asp60, which acts as the Nucleophile. Positions 107-111 (FHARF) are RNA binding. Residue Tyr118 participates in substrate binding. The interval 168-172 (QCQSR) is interaction with tRNA.

Belongs to the tRNA pseudouridine synthase TruA family. In terms of assembly, homodimer.

The enzyme catalyses uridine(38/39/40) in tRNA = pseudouridine(38/39/40) in tRNA. Functionally, formation of pseudouridine at positions 38, 39 and 40 in the anticodon stem and loop of transfer RNAs. In Klebsiella pneumoniae subsp. pneumoniae (strain ATCC 700721 / MGH 78578), this protein is tRNA pseudouridine synthase A.